The following is a 254-amino-acid chain: Alcohol dehydrogenase (254 aa).

An NAD(+)-binding site is contributed by 10-33; that stretch reads FVAGLGGIGLDTSRELVKRDLKNL. Ser-138 serves as a coordination point for substrate. The active-site Proton acceptor is the Tyr-151.

Belongs to the short-chain dehydrogenases/reductases (SDR) family. As to quaternary structure, homodimer.

The catalysed reaction is a primary alcohol + NAD(+) = an aldehyde + NADH + H(+). It carries out the reaction a secondary alcohol + NAD(+) = a ketone + NADH + H(+). The chain is Alcohol dehydrogenase (Adh) from Drosophila subobscura (Fruit fly).